We begin with the raw amino-acid sequence, 400 residues long: MSESVRTNTSIWSKGMLSVIVAQFLSAFGDNALLFATLALLKAQFYPDWSQPVLQMVFVGAYILFAPFVGQMADSFAKGRVMMVANGLKLAGAAGICLGVNPFVGYTLVGIGAAAYSPAKYGILGELTTGDKLVKANGLMEASTIAAILLGSVAGGVLADWHVIAALVACALAYAGAVAANLFIPKLVAARPGQSWRLSAMTRSFFSACVVLWRNGETRFSLVGTGLFWGAGVTLRFLLVLWVPVALGITDNATPTYLNAMVAVGIVVGAGAAAKLVTLETVSRCMPAGILIGVVVAIFSLQHALLPAYALLLLIGMLGGFFVVPLNALLQERGKKSVGAGNAIAVQNLGENSAMLLMLGLYSLAVLVGVPAVAIGIGFGVLFALAIAALWIWQRRQASY.

The next 12 helical transmembrane spans lie at 19 to 39 (VIVAQFLSAFGDNALLFATLA), 53 to 73 (VLQMVFVGAYILFAPFVGQMA), 91 to 111 (AGAAGICLGVNPFVGYTLVGI), 139 to 159 (LMEASTIAAILLGSVAGGVLA), 164 to 184 (IAALVACALAYAGAVAANLFI), 195 to 213 (SWRLSAMTRSFFSACVVLW), 227 to 247 (LFWGAGVTLRFLLVLWVPVAL), 257 to 277 (YLNAMVAVGIVVGAGAAAKLV), 281 to 301 (TVSRCMPAGILIGVVVAIFSL), 304 to 324 (ALLPAYALLLLIGMLGGFFVV), 352 to 372 (NSAMLLMLGLYSLAVLVGVPA), and 373 to 393 (VAIGIGFGVLFALAIAALWIW).

This sequence belongs to the major facilitator superfamily. LplT (TC 2.A.1.42) family.

The protein localises to the cell inner membrane. In terms of biological role, catalyzes the facilitated diffusion of 2-acyl-glycero-3-phosphoethanolamine (2-acyl-GPE) into the cell. In Salmonella enteritidis PT4 (strain P125109), this protein is Lysophospholipid transporter LplT.